A 412-amino-acid chain; its full sequence is Maltoporin (412 aa).

Residues M1–A22 form the signal peptide.

It belongs to the porin LamB (TC 1.B.3) family. Homotrimer formed of three 18-stranded antiparallel beta-barrels, containing three independent channels.

The protein localises to the cell outer membrane. It catalyses the reaction beta-maltose(in) = beta-maltose(out). Functionally, involved in the transport of maltose and maltodextrins. The polypeptide is Maltoporin (Vibrio cholerae serotype O1 (strain ATCC 39315 / El Tor Inaba N16961)).